We begin with the raw amino-acid sequence, 156 residues long: Transcription antitermination protein NusB (156 aa).

The protein belongs to the NusB family.

Involved in transcription antitermination. Required for transcription of ribosomal RNA (rRNA) genes. Binds specifically to the boxA antiterminator sequence of the ribosomal RNA (rrn) operons. This Rickettsia rickettsii (strain Iowa) protein is Transcription antitermination protein NusB.